The following is a 201-amino-acid chain: Small ribosomal subunit protein uS4 (201 aa).

The S4 RNA-binding domain maps to 91-151 (SRLDNVVYRA…EKSQKMNWFE (61 aa)).

This sequence belongs to the universal ribosomal protein uS4 family. Part of the 30S ribosomal subunit. Contacts protein S5. The interaction surface between S4 and S5 is involved in control of translational fidelity.

In terms of biological role, one of the primary rRNA binding proteins, it binds directly to 16S rRNA where it nucleates assembly of the body of the 30S subunit. With S5 and S12 plays an important role in translational accuracy. This Corynebacterium glutamicum (strain ATCC 13032 / DSM 20300 / JCM 1318 / BCRC 11384 / CCUG 27702 / LMG 3730 / NBRC 12168 / NCIMB 10025 / NRRL B-2784 / 534) protein is Small ribosomal subunit protein uS4.